The following is a 234-amino-acid chain: Thrombin-like enzyme ancrod (234 aa).

Residues valine 1–alanine 227 enclose the Peptidase S1 domain. 6 disulfide bridges follow: cysteine 7/cysteine 141, cysteine 28/cysteine 44, cysteine 78/cysteine 232, cysteine 120/cysteine 188, cysteine 152/cysteine 167, and cysteine 178/cysteine 203. N-linked (GlcNAc...) asparagine glycosylation is present at asparagine 23. Histidine 43 serves as the catalytic Charge relay system. Residue asparagine 79 is glycosylated (N-linked (GlcNAc...) asparagine). The Charge relay system role is filled by aspartate 88. Asparagine 99 and asparagine 148 each carry an N-linked (GlcNAc...) asparagine glycan. Serine 182 functions as the Charge relay system in the catalytic mechanism. Asparagine 229 is a glycosylation site (N-linked (GlcNAc...) asparagine).

It belongs to the peptidase S1 family. Snake venom subfamily. As to quaternary structure, monomer. In terms of tissue distribution, expressed by the venom gland.

The protein localises to the secreted. It catalyses the reaction Selective cleavage of Arg-|-Xaa bond in fibrinogen, to form fibrin, and release fibrinopeptide A. The specificity of further degradation of fibrinogen varies with species origin of the enzyme.. Thrombin-like snake venom serine protease that acts as an anticoagulant. It cleaves fibrinogen (FGA) to split off the A-fibrinopeptides (A, AY and AP), but not the B-fibrinopeptide. The resulting fibrin polymers are imperfectly formed and much smaller in size (1 to 2 um long) than the fibrin polymers produced by the action of thrombin. These ancrod-induced microthrombi are friable, unstable, urea-soluble and have significantly degraded alpha chains. They do not cross-link to form thrombi. They are markedly susceptible to digestion by plasmin and are rapidly removed from circulation by either reticuloendothelial phagocytosis or normal fibrinolysis, or both. Anticoagulation through the removal of fibrinogen from the blood is rapid, occurring within hours following its administration. It does not activate plasminogen and does not degrade preformed, fully cross-linked thrombin fibrin. It also reduces the level of plasminogen activator inhibitor (PAI) and may stimulate the release of tissue plasminogen activator (PLAT) from the endothelium. The profibrinolytic effect of these 2 actions appears to be limited to local microthrombus degradation. The chain is Thrombin-like enzyme ancrod from Calloselasma rhodostoma (Malayan pit viper).